Here is a 1015-residue protein sequence, read N- to C-terminus: MSTVKKSSKKKSSKKSSSGNESSKKSSPKIVPKHTAKNLPKPIKNFEIDLDKCANCPGCLTYLSFIRQVENIIQQNSSRSTTTQLIVKLISNFVWKYRFTYEQIAVNLFKYKFKERGYLVKILVSLGFDPNNLKINGHKVLKILVYENDIPSIIALVENGANIDFGKAPSNILHICASRNYPVLLKYALSRNEIDINAVNIDGRSPLYLACLYLNKECIKILLDNGADVEVCTPDEKTCCLELIIFLGNIMHNNLEVYTEIYQRYGDKYSDNISELVGNIVDALKYIISAKNNMSRQEIYTIRNLCFNKPIVMNEKIVFDLFVFIMDKFPKIVYNKFTHLGHNAINTSIMFCNNSLIKYFVDKTDLDFQAINNNITNPIQMLVNHGYIDYVETILNRNPKIVSTKCRYNNNLLHYTLMPCYVYSNVPRIKSDKDIIELVKIFANNKKINQNHRNNSGYRPIEVAIRYCSIDVIKELLKYNTTIFAENRIKQQLFPVLNNNDIISFATQLGRFDVVTYLIQENVQFQLYQIDDIHTVPTALLIAIVYHRKNFIQFFLELPQITDCLNNDVTKEYVINFANMYSNYNVQITDTYNLNFIGNDKMSFTHRIDRMIHFYSVHYGYSKMVILSGLSTILSLLEKICLASKKCKNYRNLPNSKFLEATIFSNGPCDLTFRNEFSNLYTDINLLNYMNDSKFFDNIVEIIGDLIEYPILLDIFEYMFAVRDLPISSQPIIKFIESLGLINQSNKIIKINKIVNELLNKSEISIDLNDQDTHNYDDYVENDPEFDSDEFDTDEFSDEAIKDFFGLDNKNLLTDKTSSPIKPIKNNQKENFNKKIDKYRVENMLHKFCRGEKLPHYDIIYKCLMQTDYYQILDNKIVVHNNEIILAVIYKLKSSDSTNSQMSHKPSVKTNPSDWIKSYSTNICSPNKQDHYHMFPFVLDWILYKWSCVEFQTKDKIYPTEFNTHLYFYGELNTNGRMVKGCFEYFLNCHKSLYHRLFHEIDRVPPQIQRKIYNH.

The segment covering 1–14 (MSTVKKSSKKKSSK) has biased composition (basic residues). The tract at residues 1–37 (MSTVKKSSKKKSSKKSSSGNESSKKSSPKIVPKHTAK) is disordered. ANK repeat units lie at residues 136–165 (NGHK…NIDF), 168–201 (APSN…AVNI), 202–231 (DGRS…DVEV), 340–370 (LGHN…DFQA), 374–403 (NITN…KIVS), 456–485 (SGYR…TIFA), 498–527 (NNND…QFQL), and 535–564 (TVPT…ITDC).

This chain is Putative ankyrin repeat protein R96, found in Acanthamoeba polyphaga mimivirus (APMV).